We begin with the raw amino-acid sequence, 525 residues long: RNA-directed RNA polymerase (525 aa).

One can recognise a RdRp catalytic domain in the interval 72–272 (LVYADNIYIV…DKERLFCSAA (201 aa)).

Interacts with VP3 in the cytoplasm. May exist in multiple phosphorylated forms.

The protein localises to the virion. The catalysed reaction is RNA(n) + a ribonucleoside 5'-triphosphate = RNA(n+1) + diphosphate. RNA-dependent RNA polymerase which is found both free and covalently attached to the genomic RNA. May also contain guanylyl and methyl transferase activities. This is RNA-directed RNA polymerase (VP1) from Gallus gallus (Chicken).